The primary structure comprises 865 residues: cGMP-specific 3',5'-cyclic phosphodiesterase (865 aa).

Phosphoserine is present on Ser92. GAF domains are found at residues 154-304 (DVTA…GIVL) and 336-493 (SLEV…GLGI). The PDEase domain occupies 526 to 850 (ETRELQSLAA…QKWQALAEQQ (325 aa)). His603 acts as the Proton donor in catalysis. Zn(2+) is bound by residues His607, His643, Asp644, and Asp754. Position 644 (Asp644) interacts with Mg(2+). Gln807 is a 3',5'-cyclic GMP binding site.

Belongs to the cyclic nucleotide phosphodiesterase family. It depends on Zn(2+) as a cofactor. Mg(2+) is required as a cofactor. Post-translationally, phosphorylation is regulated by binding of cGMP to the two allosteric sites. Phosphorylation by PRKG1 leads to its activation.

It catalyses the reaction 3',5'-cyclic GMP + H2O = GMP + H(+). The protein operates within purine metabolism; 3',5'-cyclic GMP degradation; GMP from 3',5'-cyclic GMP: step 1/1. With respect to regulation, most potently inhibited by zaprinast and dipyridamole. Plays a role in signal transduction by regulating the intracellular concentration of cyclic nucleotides. This phosphodiesterase catalyzes the specific hydrolysis of cGMP to 5'-GMP. Specifically regulates nitric-oxide-generated cGMP. This is cGMP-specific 3',5'-cyclic phosphodiesterase (PDE5A) from Bos taurus (Bovine).